The sequence spans 68 residues: Large ribosomal subunit protein uL30 (68 aa).

Belongs to the universal ribosomal protein uL30 family. As to quaternary structure, part of the 50S ribosomal subunit.

This Bartonella tribocorum (strain CIP 105476 / IBS 506) protein is Large ribosomal subunit protein uL30.